The sequence spans 456 residues: 3-isopropylmalate dehydratase large subunit (456 aa).

[4Fe-4S] cluster contacts are provided by Cys-336, Cys-396, and Cys-399.

This sequence belongs to the aconitase/IPM isomerase family. LeuC type 1 subfamily. In terms of assembly, heterodimer of LeuC and LeuD. [4Fe-4S] cluster is required as a cofactor.

It carries out the reaction (2R,3S)-3-isopropylmalate = (2S)-2-isopropylmalate. It functions in the pathway amino-acid biosynthesis; L-leucine biosynthesis; L-leucine from 3-methyl-2-oxobutanoate: step 2/4. Catalyzes the isomerization between 2-isopropylmalate and 3-isopropylmalate, via the formation of 2-isopropylmaleate. The sequence is that of 3-isopropylmalate dehydratase large subunit from Staphylococcus haemolyticus (strain JCSC1435).